Consider the following 191-residue polypeptide: Large ribosomal subunit protein uL6B (191 aa).

This sequence belongs to the universal ribosomal protein uL6 family. As to quaternary structure, component of the large ribosomal subunit (LSU). Mature yeast ribosomes consist of a small (40S) and a large (60S) subunit. The 40S small subunit contains 1 molecule of ribosomal RNA (18S rRNA) and 33 different proteins (encoded by 57 genes). The large 60S subunit contains 3 rRNA molecules (25S, 5.8S and 5S rRNA) and 46 different proteins (encoded by 81 genes).

It is found in the cytoplasm. Component of the ribosome, a large ribonucleoprotein complex responsible for the synthesis of proteins in the cell. The small ribosomal subunit (SSU) binds messenger RNAs (mRNAs) and translates the encoded message by selecting cognate aminoacyl-transfer RNA (tRNA) molecules. The large subunit (LSU) contains the ribosomal catalytic site termed the peptidyl transferase center (PTC), which catalyzes the formation of peptide bonds, thereby polymerizing the amino acids delivered by tRNAs into a polypeptide chain. The nascent polypeptides leave the ribosome through a tunnel in the LSU and interact with protein factors that function in enzymatic processing, targeting, and the membrane insertion of nascent chains at the exit of the ribosomal tunnel. In Saccharomyces cerevisiae (strain ATCC 204508 / S288c) (Baker's yeast), this protein is Large ribosomal subunit protein uL6B.